A 225-amino-acid polypeptide reads, in one-letter code: uncharacterized protein (225 aa).

This sequence belongs to the mimivirus L31/R44 family.

This is an uncharacterized protein from Acanthamoeba polyphaga (Amoeba).